The primary structure comprises 423 residues: UDP-N-acetylglucosamine 1-carboxyvinyltransferase (423 aa).

22–23 contributes to the phosphoenolpyruvate binding site; it reads KN. Arg93 contacts UDP-N-acetyl-alpha-D-glucosamine. Residue Cys117 is the Proton donor of the active site. The residue at position 117 (Cys117) is a 2-(S-cysteinyl)pyruvic acid O-phosphothioketal. UDP-N-acetyl-alpha-D-glucosamine is bound by residues 122 to 126, Asp308, and Ile330; that span reads RPVDL.

Belongs to the EPSP synthase family. MurA subfamily.

The protein localises to the cytoplasm. The catalysed reaction is phosphoenolpyruvate + UDP-N-acetyl-alpha-D-glucosamine = UDP-N-acetyl-3-O-(1-carboxyvinyl)-alpha-D-glucosamine + phosphate. It participates in cell wall biogenesis; peptidoglycan biosynthesis. Its function is as follows. Cell wall formation. Adds enolpyruvyl to UDP-N-acetylglucosamine. The sequence is that of UDP-N-acetylglucosamine 1-carboxyvinyltransferase from Maricaulis maris (strain MCS10) (Caulobacter maris).